Consider the following 458-residue polypeptide: tRNA modification GTPase MnmE (458 aa).

Residues Arg-23, Glu-80, and Lys-122 each contribute to the (6S)-5-formyl-5,6,7,8-tetrahydrofolate site. In terms of domain architecture, TrmE-type G spans 218-380 (GMKIVIAGRP…LREHLQQTMG (163 aa)). Asn-228 contacts K(+). Residues 228 to 233 (NVGKSS), 247 to 253 (TQIPGTT), 272 to 275 (DTAG), and 361 to 363 (SAR) each bind GTP. Residue Ser-232 coordinates Mg(2+). The K(+) site is built by Thr-247, Ile-249, and Thr-252. Thr-253 serves as a coordination point for Mg(2+). Lys-458 contacts (6S)-5-formyl-5,6,7,8-tetrahydrofolate.

This sequence belongs to the TRAFAC class TrmE-Era-EngA-EngB-Septin-like GTPase superfamily. TrmE GTPase family. In terms of assembly, homodimer. Heterotetramer of two MnmE and two MnmG subunits. The cofactor is K(+).

Its subcellular location is the cytoplasm. Functionally, exhibits a very high intrinsic GTPase hydrolysis rate. Involved in the addition of a carboxymethylaminomethyl (cmnm) group at the wobble position (U34) of certain tRNAs, forming tRNA-cmnm(5)s(2)U34. This Hamiltonella defensa subsp. Acyrthosiphon pisum (strain 5AT) protein is tRNA modification GTPase MnmE.